The sequence spans 254 residues: Ribosomal RNA small subunit methyltransferase G (254 aa).

Positions 1–21 are disordered; that stretch reads MPEGDGVPRETPSPSVVPESP. A compositionally biased stretch (low complexity) spans 9–21; the sequence is RETPSPSVVPESP. Residues Gly-90, Leu-95, 142 to 143, and Arg-157 each bind S-adenosyl-L-methionine; that span reads AE. Residues 230–254 form a disordered region; the sequence is GPLRAATAPAPPGAAKRRPGKGNRR. The span at 244–254 shows a compositional bias: basic residues; it reads AKRRPGKGNRR.

The protein belongs to the methyltransferase superfamily. RNA methyltransferase RsmG family.

It localises to the cytoplasm. In terms of biological role, specifically methylates the N7 position of guanine in position 518 of 16S rRNA. The protein is Ribosomal RNA small subunit methyltransferase G of Kineococcus radiotolerans (strain ATCC BAA-149 / DSM 14245 / SRS30216).